Reading from the N-terminus, the 151-residue chain is Cysteine proteinase inhibitor 10 (151 aa).

The N-terminal stretch at 1-22 is a signal peptide; it reads MATSPMLFLVSLLLVLVAAATG. Positions 40 to 109 constitute a Cystatin domain; that stretch reads GGRTEIRDVG…GVAYYLKVAA (70 aa). The Secondary area of contact motif lies at 96-100; it reads QVVSG.

This sequence belongs to the cystatin family. Phytocystatin subfamily.

It is found in the secreted. Its function is as follows. Specific inhibitor of cysteine proteinases. Probably involved in the regulation of endogenous processes and in defense against pests and pathogens. The protein is Cysteine proteinase inhibitor 10 of Oryza sativa subsp. indica (Rice).